The following is a 54-amino-acid chain: ATP synthase F(0) complex subunit 8 (54 aa).

Residues 8–24 (PWFSIMLLTWFTFSLLI) form a helical membrane-spanning segment.

The protein belongs to the ATPase protein 8 family. As to quaternary structure, component of the ATP synthase complex composed at least of ATP5F1A/subunit alpha, ATP5F1B/subunit beta, ATP5MC1/subunit c (homooctomer), MT-ATP6/subunit a, MT-ATP8/subunit 8, ATP5ME/subunit e, ATP5MF/subunit f, ATP5MG/subunit g, ATP5MK/subunit k, ATP5MJ/subunit j, ATP5F1C/subunit gamma, ATP5F1D/subunit delta, ATP5F1E/subunit epsilon, ATP5PF/subunit F6, ATP5PB/subunit b, ATP5PD/subunit d, ATP5PO/subunit OSCP. ATP synthase complex consists of a soluble F(1) head domain (subunits alpha(3) and beta(3)) - the catalytic core - and a membrane F(0) domain - the membrane proton channel (subunits c, a, 8, e, f, g, k and j). These two domains are linked by a central stalk (subunits gamma, delta, and epsilon) rotating inside the F1 region and a stationary peripheral stalk (subunits F6, b, d, and OSCP).

It localises to the mitochondrion membrane. In terms of biological role, subunit 8, of the mitochondrial membrane ATP synthase complex (F(1)F(0) ATP synthase or Complex V) that produces ATP from ADP in the presence of a proton gradient across the membrane which is generated by electron transport complexes of the respiratory chain. ATP synthase complex consist of a soluble F(1) head domain - the catalytic core - and a membrane F(1) domain - the membrane proton channel. These two domains are linked by a central stalk rotating inside the F(1) region and a stationary peripheral stalk. During catalysis, ATP synthesis in the catalytic domain of F(1) is coupled via a rotary mechanism of the central stalk subunits to proton translocation. In vivo, can only synthesize ATP although its ATP hydrolase activity can be activated artificially in vitro. Part of the complex F(0) domain. This Gallus gallus (Chicken) protein is ATP synthase F(0) complex subunit 8.